A 466-amino-acid chain; its full sequence is Asparagine--tRNA ligase (466 aa).

Belongs to the class-II aminoacyl-tRNA synthetase family. Homodimer.

The protein resides in the cytoplasm. The enzyme catalyses tRNA(Asn) + L-asparagine + ATP = L-asparaginyl-tRNA(Asn) + AMP + diphosphate + H(+). In Yersinia pseudotuberculosis serotype O:1b (strain IP 31758), this protein is Asparagine--tRNA ligase.